We begin with the raw amino-acid sequence, 149 residues long: Transcriptional repressor NrdR (149 aa).

Residues 3–34 (CPFCSATDTKVIDSRLVADGHQVRRRRECTLC) fold into a zinc finger. In terms of domain architecture, ATP-cone spans 49-139 (PRVIKRDDTR…VYRAFEDVSQ (91 aa)).

Belongs to the NrdR family. Requires Zn(2+) as cofactor.

Its function is as follows. Negatively regulates transcription of bacterial ribonucleotide reductase nrd genes and operons by binding to NrdR-boxes. The sequence is that of Transcriptional repressor NrdR from Shewanella denitrificans (strain OS217 / ATCC BAA-1090 / DSM 15013).